Here is a 273-residue protein sequence, read N- to C-terminus: Nickel permease LarQ (273 aa).

Transmembrane regions (helical) follow at residues 64-84, 117-137, 159-179, 210-230, and 251-271; these read LIQL…ILLW, MLFV…FFGL, LAGL…AIAI, LIGA…LELY, and HWRD…FIFW.

This sequence belongs to the CbiQ family. In terms of assembly, may form an energy-coupling factor (ECF) transporter complex composed of an ATP-binding protein (A component, LarO), a transmembrane protein (T component, LarQ) and a fused possible substrate-capture protein (S component, LarMN) of unknown stoichiometry.

The protein resides in the cell membrane. In terms of biological role, probable transmembrane component of the energy-coupling factor (ECF) transporter complex LarMNQO involved in nickel import. This chain is Nickel permease LarQ, found in Lactiplantibacillus plantarum (strain ATCC BAA-793 / NCIMB 8826 / WCFS1) (Lactobacillus plantarum).